The primary structure comprises 373 residues: Valienol-1-phosphate guanylyltransferase (373 aa).

Residues glycine 177 and 192–193 each bind substrate; that span reads EK.

It belongs to the bacterial/plant glucose-1-phosphate adenylyltransferase family. Requires Mg(2+) as cofactor.

The enzyme catalyses valienol 1-phosphate + GTP + H(+) = GDP-valienol + diphosphate. Its function is as follows. Involved in the biosynthesis of the antifungal agent validamycin A. Catalyzes the conversion of valienol 1-phosphate to GDP-valienol and less effectively to ADP-valienol or other NDP derivatives. The chain is Valienol-1-phosphate guanylyltransferase from Streptomyces hygroscopicus subsp. limoneus.